The chain runs to 206 residues: MAAHSEQIKNNFLNNPYAQQVFNIANGQVSALDAELNKYPILRQLEQQTKVPKAYGVIALGFSSVLLIFFNMFGLAQPISNLIGWALPAYLSILAIESPQTNDDKQWLTYWVVFGSLNLVESMGLRAVLYWVPMYFVFKTLFTIWLMLPATRGAEILYFHFLRPMVGNVKSRSQSSFGTSDPLAKETGFNPAGTTAPSSFAHEKTL.

Over 1–52 the chain is Cytoplasmic; the sequence is MAAHSEQIKNNFLNNPYAQQVFNIANGQVSALDAELNKYPILRQLEQQTKVP. A helical membrane pass occupies residues 53–72; that stretch reads KAYGVIALGFSSVLLIFFNM. The Lumenal segment spans residues 73–74; it reads FG. A helical membrane pass occupies residues 75-95; the sequence is LAQPISNLIGWALPAYLSILA. Residues 96–105 are Cytoplasmic-facing; the sequence is IESPQTNDDK. Residues 106–122 traverse the membrane as a helical segment; the sequence is QWLTYWVVFGSLNLVES. Residues 123 to 126 lie on the Lumenal side of the membrane; it reads MGLR. The chain crosses the membrane as a helical span at residues 127–145; that stretch reads AVLYWVPMYFVFKTLFTIW. The Cytoplasmic segment spans residues 146–206; sequence LMLPATRGAE…PSSFAHEKTL (61 aa). The disordered stretch occupies residues 177–206; the sequence is FGTSDPLAKETGFNPAGTTAPSSFAHEKTL.

It belongs to the DP1 family. Oligomer.

It is found in the endoplasmic reticulum membrane. It localises to the golgi apparatus membrane. Its function is as follows. Required to generate and maintain the structure of the tubular endoplasmic reticulum network and the vacuole. Induces high curvature in membranes and causes membrane tubule formation. Involved in membrane/vesicle trafficking. The polypeptide is Protein YOP1 (YOP1) (Cryptococcus neoformans var. neoformans serotype D (strain B-3501A) (Filobasidiella neoformans)).